Consider the following 62-residue polypeptide: Photosystem II reaction center protein Z (62 aa).

A run of 2 helical transmembrane segments spans residues Ala8–Ala28 and Trp41–Val61.

This sequence belongs to the PsbZ family. In terms of assembly, PSII is composed of 1 copy each of membrane proteins PsbA, PsbB, PsbC, PsbD, PsbE, PsbF, PsbH, PsbI, PsbJ, PsbK, PsbL, PsbM, PsbT, PsbX, PsbY, PsbZ, Psb30/Ycf12, peripheral proteins PsbO, CyanoQ (PsbQ), PsbU, PsbV and a large number of cofactors. It forms dimeric complexes.

The protein localises to the cellular thylakoid membrane. Its function is as follows. May control the interaction of photosystem II (PSII) cores with the light-harvesting antenna, regulates electron flow through the 2 photosystem reaction centers. PSII is a light-driven water plastoquinone oxidoreductase, using light energy to abstract electrons from H(2)O, generating a proton gradient subsequently used for ATP formation. In Gloeothece citriformis (strain PCC 7424) (Cyanothece sp. (strain PCC 7424)), this protein is Photosystem II reaction center protein Z.